A 201-amino-acid chain; its full sequence is Bradykinin potentiating and C-type natriuretic peptides (201 aa).

An N-terminal signal peptide occupies residues 1–23; it reads MFVSRLAASGLLLLALLAVSLDG. Positions 24–47 are excised as a propeptide; it reads KPVQQWSQNWPGPKVPPLVVQQWS. At Gln48 the chain carries Pyrrolidone carboxylic acid. A propeptide spanning residues 58–60 is cleaved from the precursor; sequence LVV. At Gln61 the chain carries Pyrrolidone carboxylic acid. 2 propeptides span residues 67–95 and 107–179; these read TQLQ…AALD and GSKA…LAKK. Positions 90–172 are disordered; that stretch reads PDAALDTPPA…GGGGGGGARR (83 aa). The span at 120 to 130 shows a compositional bias: low complexity; the sequence is SKGASATSTAS. The segment covering 132–142 has biased composition (basic and acidic residues); the sequence is PMRDLRTDGKQ. Positions 159-170 are enriched in gly residues; it reads PGGGGGGGGGGA. Residues Cys185 and Cys201 are joined by a disulfide bond.

This sequence in the N-terminal section; belongs to the bradykinin-potentiating peptide family. In the central section; belongs to the bradykinin inhibitor peptide family. It in the C-terminal section; belongs to the natriuretic peptide family. As to expression, venom gland.

The protein localises to the secreted. Functionally, inhibits the activity of the angiotensin-converting enzyme (ACE) by a preferential interaction with its C-domain. May also potentiate the hypotensive effects of bradykinin. Its function is as follows. Antagonizes the vasodilatory actions of bradykinin at the B2 bradykinin receptor. In terms of biological role, has a vasorelaxant activity in rat aortic strips and a diuretic potency in anesthetized rats. May act by activating natriuretic receptors (NPR1 and/or NPR2). The sequence is that of Bradykinin potentiating and C-type natriuretic peptides from Sistrurus catenatus edwardsii (Desert massasauga).